We begin with the raw amino-acid sequence, 397 residues long: Elongation factor Tu (397 aa).

The region spanning 10–206 is the tr-type G domain; it reads KPHCNIGTIG…AVDTWIPDPQ (197 aa). Residues 19–26 are G1; sequence GHVDHGKT. 19–26 is a GTP binding site; sequence GHVDHGKT. Residue Thr26 participates in Mg(2+) binding. Residues 61-65 form a G2 region; the sequence is GITIS. Residues 82–85 form a G3 region; the sequence is DCPG. GTP-binding positions include 82-86 and 137-140; these read DCPGH and NKCD. A G4 region spans residues 137 to 140; the sequence is NKCD. Positions 175-177 are G5; sequence SAL.

It belongs to the TRAFAC class translation factor GTPase superfamily. Classic translation factor GTPase family. EF-Tu/EF-1A subfamily. In terms of assembly, monomer.

The protein resides in the cytoplasm. It carries out the reaction GTP + H2O = GDP + phosphate + H(+). GTP hydrolase that promotes the GTP-dependent binding of aminoacyl-tRNA to the A-site of ribosomes during protein biosynthesis. The chain is Elongation factor Tu from Lachnoclostridium phytofermentans (strain ATCC 700394 / DSM 18823 / ISDg) (Clostridium phytofermentans).